A 223-amino-acid chain; its full sequence is Small ribosomal subunit protein uS3 (223 aa).

The KH type-2 domain maps to 38 to 106 (IKKYLKSKLA…EVHLNIVEIR (69 aa)).

Belongs to the universal ribosomal protein uS3 family. In terms of assembly, part of the 30S ribosomal subunit. Forms a tight complex with proteins S10 and S14.

Binds the lower part of the 30S subunit head. Binds mRNA in the 70S ribosome, positioning it for translation. The polypeptide is Small ribosomal subunit protein uS3 (Rhodospirillum rubrum (strain ATCC 11170 / ATH 1.1.1 / DSM 467 / LMG 4362 / NCIMB 8255 / S1)).